Consider the following 387-residue polypeptide: SpoIVD-associated factor A (387 aa).

A LysM domain is found at 2 to 47 (KIHIVQKGDSLWKIAEKYGVDVEEVKKLNTQLSNPDLIMPGMKIKV). 2 disordered regions span residues 49-106 (SEGV…MPNL) and 355-387 (NPNP…EENE). Positions 70-96 (KQEHPYAKEKPKSVVDVEDTKPKEKKS) are enriched in basic and acidic residues. Residues 368–377 (PMTNQPSVNQ) are compositionally biased toward polar residues.

The protein resides in the spore cortex. Functionally, probably involved in the assembly of some coat protein components implicated in both lysozyme resistance and germination. Could be required for the assembly of CotG. Associates with SpoIVD during the early stage of coat assembly. The protein is SpoIVD-associated factor A (safA) of Bacillus subtilis (strain 168).